A 206-amino-acid polypeptide reads, in one-letter code: Thymidylate kinase (206 aa).

11–18 (GIDGAGKT) is a binding site for ATP.

The protein belongs to the thymidylate kinase family.

It catalyses the reaction dTMP + ATP = dTDP + ADP. Its function is as follows. Phosphorylation of dTMP to form dTDP in both de novo and salvage pathways of dTTP synthesis. The polypeptide is Thymidylate kinase (Paraburkholderia xenovorans (strain LB400)).